Reading from the N-terminus, the 225-residue chain is Biosynthetic peptidoglycan transglycosylase (225 aa).

A helical membrane pass occupies residues 8-28; that stretch reads VLLIFIGAILLIQLWIFSSLV.

It belongs to the glycosyltransferase 51 family.

Its subcellular location is the cell inner membrane. It catalyses the reaction [GlcNAc-(1-&gt;4)-Mur2Ac(oyl-L-Ala-gamma-D-Glu-L-Lys-D-Ala-D-Ala)](n)-di-trans,octa-cis-undecaprenyl diphosphate + beta-D-GlcNAc-(1-&gt;4)-Mur2Ac(oyl-L-Ala-gamma-D-Glu-L-Lys-D-Ala-D-Ala)-di-trans,octa-cis-undecaprenyl diphosphate = [GlcNAc-(1-&gt;4)-Mur2Ac(oyl-L-Ala-gamma-D-Glu-L-Lys-D-Ala-D-Ala)](n+1)-di-trans,octa-cis-undecaprenyl diphosphate + di-trans,octa-cis-undecaprenyl diphosphate + H(+). Its pathway is cell wall biogenesis; peptidoglycan biosynthesis. Peptidoglycan polymerase that catalyzes glycan chain elongation from lipid-linked precursors. The polypeptide is Biosynthetic peptidoglycan transglycosylase (Acinetobacter baumannii (strain ACICU)).